Here is a 235-residue protein sequence, read N- to C-terminus: Proteasome subunit alpha type-2-A (235 aa).

Residue Lys-64 forms a Glycyl lysine isopeptide (Lys-Gly) (interchain with G-Cter in ubiquitin) linkage.

This sequence belongs to the peptidase T1A family. In terms of assembly, component of the 20S core complex of the 26S proteasome. The 26S proteasome is composed of a core protease (CP), known as the 20S proteasome, capped at one or both ends by the 19S regulatory particle (RP/PA700). The 20S proteasome core is composed of 28 subunits that are arranged in four stacked rings, resulting in a barrel-shaped structure. The two end rings are each formed by seven alpha subunits, and the two central rings are each formed by seven beta subunits. The catalytic chamber with the active sites is on the inside of the barrel.

It is found in the cytoplasm. Its subcellular location is the nucleus. Functionally, the proteasome is a multicatalytic proteinase complex which is characterized by its ability to cleave peptides with Arg, Phe, Tyr, Leu, and Glu adjacent to the leaving group at neutral or slightly basic pH. The proteasome has an ATP-dependent proteolytic activity. The polypeptide is Proteasome subunit alpha type-2-A (PAB1) (Arabidopsis thaliana (Mouse-ear cress)).